The sequence spans 704 residues: Translational regulator orb2 (704 aa).

The segment at methionine 1–isoleucine 64 is disordered. The gln/His-rich stretch occupies residues methionine 1–histidine 87. Residues alanine 9 to threonine 42 are compositionally biased toward low complexity. Phosphoserine occurs at positions 74, 88, and 100. Disordered regions lie at residues phenylalanine 82–leucine 106, leucine 166–proline 266, and serine 417–valine 438. Residues cysteine 163–glycine 240 form a gln/His-rich region. 3 stretches are compositionally biased toward low complexity: residues glutamine 176 to leucine 205, glutamine 218 to serine 233, and serine 417 to proline 429. Residues serine 425 and serine 428 each carry the phosphoserine modification. RRM domains lie at arginine 447 to leucine 538 and lysine 555 to leucine 637.

Monomer. Upon neuronal stimulation, forms stable amyloid-like oligomers composed of isoform A and isoform B which are required for formation of persistent long-term memory. Isoform A is critical for oligomer formation. Phe-5 of isoform A is required for amyloid-like oligomerization. Rapidly forms amyloids and toxic intermediates are extremely transient. Unlike in the adult nervous system, remains monomeric in the early embryo. Interacts with the translational regulator bol. Interacts with Tob; the interaction is enhanced by neuronal stimulation, stabilizes isoform A and induces oligomerization. Post-translationally, phosphorylation regulates interaction with Tob and oligomerization. Protein phosphatase 2A keeps both Orb2 and Tob in an unphosphorylated form. Following synaptic activation, unphosphorylated Orb2 is bound and stabilized by unphosphorylated Tob. Tob recruits activated LimK which phosphorylates both Orb2 and Tob and enhances Orb2 oligomerization. In terms of tissue distribution, broadly expressed throughout the nervous system of embryo, larva and adult including the ventral nerve cord and brain (at protein level). In early embryos, deposited maternally and distributed uniformly throughout the embryo until the extended germband stage. By mid-embryogenesis, highest levels are found in the central and peripheral nervous systems with lower expression also detected in the ectoderm and mesoderm. In adults, high levels are present in the head and body of both sexes with higher expression in testis than ovary. In the ovary, expressed in both germ and follicle cells. In adult head, predominantly neuronal with broad expression throughout the brain and ventral ganglia including the mushroom body.

It localises to the perikaryon. The protein resides in the cell projection. The protein localises to the axon. It is found in the dendrite. Its subcellular location is the synapse. It localises to the cytoplasm. The protein resides in the perinuclear region. RNA-binding protein involved in translational regulation and required for long-term memory. Required in mushroom body gamma neurons for long-term memory in male courtship. Binds to mRNA 3'-UTRs. In its monomeric form, acts as a translational repressor of genes involved in neuronal growth, synapse formation and protein turnover. In its amyloid-like oligomeric form, acts as a translational activator. The monomeric form reduces poly(A) tail length and destabilizes mRNA while the oligomeric form protects and elongates the poly(A) tail and stabilizes mRNA. Involved in asymmetric cell division in the central nervous system. Plays a role in synapse formation and morphology at neuromuscular junctions by modulating the translation of the tumor suppressor brat. Required for the progression of spermatogenesis through meiosis and for sperm differentiation. During sperm differentiation, required to asymmetrically localize and activate the translation of protein kinase aPKC mRNAs which is necessary for spermatid cyst polarization. Also required during spermatid cyst polarization for localization and translation of its own mRNA. In terms of biological role, required for initial memory acquisition. Following subsequent late dopaminergic pathway activation, recruits isoform B into a complex to activate translation of CaMKII which is required for long-term memory consolidation. The chain is Translational regulator orb2 from Drosophila melanogaster (Fruit fly).